Reading from the N-terminus, the 204-residue chain is Probable molybdenum cofactor guanylyltransferase (204 aa).

GTP contacts are provided by residues 10-12 (LSG), lysine 22, aspartate 75, and aspartate 104. Aspartate 104 is a Mg(2+) binding site.

Belongs to the MobA family. Mg(2+) serves as cofactor.

It is found in the cytoplasm. It catalyses the reaction Mo-molybdopterin + GTP + H(+) = Mo-molybdopterin guanine dinucleotide + diphosphate. Functionally, transfers a GMP moiety from GTP to Mo-molybdopterin (Mo-MPT) cofactor (Moco or molybdenum cofactor) to form Mo-molybdopterin guanine dinucleotide (Mo-MGD) cofactor. This Methanocaldococcus jannaschii (strain ATCC 43067 / DSM 2661 / JAL-1 / JCM 10045 / NBRC 100440) (Methanococcus jannaschii) protein is Probable molybdenum cofactor guanylyltransferase.